A 231-amino-acid chain; its full sequence is Dephospho-CoA kinase domain-containing protein (231 aa).

Residues 3–207 (LVGLTGGIAS…HSLEYLPLRL (205 aa)) form the DPCK domain. 8–15 (GGIASGKS) lines the ATP pocket.

The protein belongs to the CoaE family.

The chain is Dephospho-CoA kinase domain-containing protein (DCAKD) from Bos taurus (Bovine).